Reading from the N-terminus, the 122-residue chain is Large ribosomal subunit protein uL14c (122 aa).

It belongs to the universal ribosomal protein uL14 family. In terms of assembly, part of the 50S ribosomal subunit.

The protein localises to the plastid. It localises to the chloroplast. Its function is as follows. Binds to 23S rRNA. This Populus trichocarpa (Western balsam poplar) protein is Large ribosomal subunit protein uL14c.